The sequence spans 198 residues: Recombination protein RecR (198 aa).

A C4-type zinc finger spans residues 57–72 (CAQCRTLTEHSLCEYC). The Toprim domain maps to 80–175 (SLLCIVESPA…RTTRIAHGIP (96 aa)).

It belongs to the RecR family.

May play a role in DNA repair. It seems to be involved in an RecBC-independent recombinational process of DNA repair. It may act with RecF and RecO. This is Recombination protein RecR from Methylococcus capsulatus (strain ATCC 33009 / NCIMB 11132 / Bath).